Here is an 815-residue protein sequence, read N- to C-terminus: uncharacterized protein (815 aa).

The zn(2)-C6 fungal-type DNA-binding region spans 31 to 57; the sequence is CDMCRRKKIKCDGLRPCKNCKAGKLEC. The helical transmembrane segment at 560-580 threads the bilayer; that stretch reads YWTTVYCGFSTIVTLIFAALL. Disordered stretches follow at residues 646–668 and 769–792; these read ESNVPINNGPQQSIDKESNSNTQ and DPDVSDGKSRESSSLNNSTPFNPT. Over residues 780–792 the composition is skewed to polar residues; it reads SSSLNNSTPFNPT.

Its subcellular location is the cytoplasm. It is found in the nucleus membrane. This is an uncharacterized protein from Schizosaccharomyces pombe (strain 972 / ATCC 24843) (Fission yeast).